Here is a 397-residue protein sequence, read N- to C-terminus: Ubiquitin-like modifier-activating enzyme 5 (397 aa).

Glycine 76, aspartate 97, lysine 120, asparagine 143, and asparagine 177 together coordinate ATP. Residues cysteine 219 and cysteine 222 each contribute to the Zn(2+) site. Cysteine 243 acts as the Glycyl thioester intermediate in catalysis. Residues cysteine 296 and cysteine 301 each contribute to the Zn(2+) site. The segment at 343 to 384 (PSDAPTDLSQSTDVGQGLRLAYEAPEKSSAEATQAATAPVDD) is disordered.

It belongs to the ubiquitin-activating E1 family. UBA5 subfamily.

E1-like enzyme which activates UFM1. The polypeptide is Ubiquitin-like modifier-activating enzyme 5 (Drosophila pseudoobscura pseudoobscura (Fruit fly)).